We begin with the raw amino-acid sequence, 255 residues long: 5-oxoprolinase subunit A 2 (255 aa).

The protein belongs to the LamB/PxpA family. Forms a complex composed of PxpA, PxpB and PxpC.

It catalyses the reaction 5-oxo-L-proline + ATP + 2 H2O = L-glutamate + ADP + phosphate + H(+). Its function is as follows. Catalyzes the cleavage of 5-oxoproline to form L-glutamate coupled to the hydrolysis of ATP to ADP and inorganic phosphate. The protein is 5-oxoprolinase subunit A 2 of Agrobacterium fabrum (strain C58 / ATCC 33970) (Agrobacterium tumefaciens (strain C58)).